A 369-amino-acid chain; its full sequence is 3,4-dihydroxy-2-butanone 4-phosphate synthase (369 aa).

The segment at 1–201 (MAFDRIEDII…IADLIHYRLS (201 aa)) is DHBP synthase. Residues 27–28 (RE), Asp32, 140–144 (RAGHT), and Glu164 each bind D-ribulose 5-phosphate. Mg(2+) is bound at residue Glu28. His143 is a Mg(2+) binding site. The tract at residues 202-369 (TEHTIVRIGE…EVIESIPFPG (168 aa)) is GTP cyclohydrolase II-like.

In the N-terminal section; belongs to the DHBP synthase family. The protein in the C-terminal section; belongs to the GTP cyclohydrolase II family. Mg(2+) is required as a cofactor. Requires Mn(2+) as cofactor.

It catalyses the reaction D-ribulose 5-phosphate = (2S)-2-hydroxy-3-oxobutyl phosphate + formate + H(+). It participates in cofactor biosynthesis; riboflavin biosynthesis; 2-hydroxy-3-oxobutyl phosphate from D-ribulose 5-phosphate: step 1/1. Functionally, catalyzes the conversion of D-ribulose 5-phosphate to formate and 3,4-dihydroxy-2-butanone 4-phosphate. The sequence is that of 3,4-dihydroxy-2-butanone 4-phosphate synthase (ribB) from Pseudomonas syringae pv. tomato (strain ATCC BAA-871 / DC3000).